Reading from the N-terminus, the 611-residue chain is POU domain, class 6, transcription factor 1 (611 aa).

The tract at residues 62–93 (ASQAAGEAGPDNLGSSAEATVKSPPGIPPSPA) is disordered. In terms of domain architecture, POU-specific spans 449 to 523 (EDGINLEEIR…VLEKWLNEAE (75 aa)). The homeobox DNA-binding region spans 544–603 (KRKRRTSFTPQAIEALNAYFEKNPLPTGQEITEIAKELNYDREVVRVWFCNRRQTLKNTS).

It belongs to the POU transcription factor family. Class-6 subfamily. In the embryo, expressed exclusively in the developing brain, whereas in the adult its expression is restricted to brain, heart, skeletal muscle and lung. In the brain, the highest expression levels are found in specific cell layers of the cortex, the olfactory bulb, the hippocampus and the cerebellum.

The protein resides in the nucleus. In terms of biological role, transcription factor that binds preferentially to a variant of the octamer motif (5'-ATGATAAT-3'). The chain is POU domain, class 6, transcription factor 1 (POU6F1) from Homo sapiens (Human).